The chain runs to 66 residues: Antitoxin RelB2 (66 aa).

Its function is as follows. Antitoxin component of a type II toxin-antitoxin (TA) system. Neutralizes the effect of cognate toxin RelE2, but no other RelE or ParE toxin. This chain is Antitoxin RelB2 (relB2), found in Caulobacter vibrioides (strain ATCC 19089 / CIP 103742 / CB 15) (Caulobacter crescentus).